The following is a 367-amino-acid chain: MNDYNSHILQWKKTIMTITTLSRQNIQALTPYQSARKLGGNGTIWLNANEYPTSPEFQLSGKDLNRYPEPQPQRVVQAYANYAGVSTENVLVTRGGDEGIELIIHTFCEPKQDAILFCPPTYGMYAVSAETAGVLSKTVPLTDDFQLNLPEIKNHLNDVKVVFVCSPNNPTGNLLKQSDILDLLQITAGKAIVVVDEAYIEFCPEASVINLLKNYPHLAIIRTLSKAFALAGLRCGFVLANPELIDILSKVIAPYPIPVPSADLAEQALRPSNIATVQALTQELLSNRQWLAKALLVLHQVEKVYESEANYLLIKCQNGQAVFKALWEQGIILRDQNKTLHLQNCIRITVGTRNECEKVVEAIKEVK.

Lys226 carries the N6-(pyridoxal phosphate)lysine modification.

The protein belongs to the class-II pyridoxal-phosphate-dependent aminotransferase family. Histidinol-phosphate aminotransferase subfamily. As to quaternary structure, homodimer. Pyridoxal 5'-phosphate is required as a cofactor.

The enzyme catalyses L-histidinol phosphate + 2-oxoglutarate = 3-(imidazol-4-yl)-2-oxopropyl phosphate + L-glutamate. It participates in amino-acid biosynthesis; L-histidine biosynthesis; L-histidine from 5-phospho-alpha-D-ribose 1-diphosphate: step 7/9. The chain is Histidinol-phosphate aminotransferase 1 (hisC1) from Haemophilus influenzae (strain ATCC 51907 / DSM 11121 / KW20 / Rd).